A 90-amino-acid polypeptide reads, in one-letter code: Barrier-to-autointegration factor B (90 aa).

It belongs to the BAF family. As to quaternary structure, homodimer. Interacts with nemp1a and nemp1b.

The protein localises to the nucleus. Its subcellular location is the chromosome. It localises to the nucleus envelope. The protein resides in the cytoplasm. Non-specific DNA-binding protein that plays key roles in mitotic nuclear reassembly, chromatin organization, DNA damage response, gene expression and intrinsic immunity against foreign DNA. Contains two non-specific double-stranded DNA (dsDNA)-binding sites which promote DNA cross-bridging. Plays a key role in nuclear membrane reformation at the end of mitosis by driving formation of a single nucleus in a spindle-independent manner. Transiently cross-bridges anaphase chromosomes via its ability to bridge distant DNA sites, leading to the formation of a dense chromatin network at the chromosome ensemble surface that limits membranes to the surface. Also acts as a negative regulator of innate immune activation by restricting CGAS activity toward self-DNA upon acute loss of nuclear membrane integrity. Outcompetes CGAS for DNA-binding, thereby preventing CGAS activation and subsequent damaging autoinflammatory responses. Also involved in DNA damage response; acts by inhibiting the ADP-ribosyltransferase activity of PARP1. Involved in the recognition of exogenous dsDNA in the cytosol: associates with exogenous dsDNA immediately after its appearance in the cytosol at endosome breakdown and is required to avoid autophagy. The sequence is that of Barrier-to-autointegration factor B (banf1-b) from Xenopus laevis (African clawed frog).